Here is a 386-residue protein sequence, read N- to C-terminus: Centrosomal protein of 44 kDa (386 aa).

The segment at 11 to 194 (RKLEQVLRSL…GVPEGTVTST (184 aa)) is binds with microtubules and centrioles. Positions 232-262 (ELTALQIALAECQEKLKKLTWIEKRLECLEA) form a coiled coil. S329 carries the phosphoserine modification. Positions 359-382 (SEETTMQKMERMKKMFEETAELLK) form a coiled coil.

In terms of assembly, interacts with CROCC. Interacts with POC1B; the interaction is direct and recruits POC1B to centriolar microtubules. Binds to centriolar microtubules.

Its subcellular location is the cytoplasm. The protein resides in the cytoskeleton. The protein localises to the microtubule organizing center. It is found in the centrosome. It localises to the centriole. Its subcellular location is the spindle pole. The protein resides in the midbody. Its function is as follows. Centriole-enriched microtubule-binding protein involved in centriole biogenesis. In collaboration with CEP295 and POC1B, is required for the centriole-to-centrosome conversion by ensuring the formation of bona fide centriole wall. Functions as a linker component that maintains centrosome cohesion. Associates with CROCC and regulates its stability and localization to the centrosome. This Rattus norvegicus (Rat) protein is Centrosomal protein of 44 kDa (Cep44).